The sequence spans 154 residues: Protein X (154 aa).

Residues 68-117 are mitochondrial targeting sequence; that stretch reads PCALRFTSARCMETTVNAPRNLPKVLHKRTLGLSAMSTTKIETYFKDCVF.

Belongs to the orthohepadnavirus protein X family. In terms of assembly, may form homodimer. May interact with host CEBPA, CFLAR, CREB1, DDB1, E4F1, HBXIP, HSPD1/HSP60, NFKBIA, POLR2E and SMAD4. Interacts with host SMC5-SMC6 complex and induces its degradation. Interacts with host TRPC4AP; leading to prevent ubiquitination of TRPC4AP. Interacts with host PLSCR1; this interaction promotes ubiquitination and degradation of HBx and impairs HBx-mediated cell proliferation. In terms of processing, a fraction may be phosphorylated in insect cells and HepG2 cells, a human hepatoblastoma cell line. Phosphorylated in vitro by host protein kinase C or mitogen-activated protein kinase. N-acetylated in insect cells.

It localises to the host cytoplasm. The protein resides in the host nucleus. It is found in the host mitochondrion. Multifunctional protein that plays a role in silencing host antiviral defenses and promoting viral transcription. Does not seem to be essential for HBV infection. May be directly involved in development of cirrhosis and liver cancer (hepatocellular carcinoma). Most of cytosolic activities involve modulation of cytosolic calcium. The effect on apoptosis is controversial depending on the cell types in which the studies have been conducted. May induce apoptosis by localizing in mitochondria and causing loss of mitochondrial membrane potential. May also modulate apoptosis by binding host CFLAR, a key regulator of the death-inducing signaling complex (DISC). Promotes viral transcription by using the host E3 ubiquitin ligase DDB1 to target the SMC5-SMC6 complex to proteasomal degradation. This host complex would otherwise bind to viral episomal DNA, and prevents its transcription. Moderately stimulates transcription of many different viral and cellular transcription elements. Promoters and enhancers stimulated by HBx contain DNA binding sites for NF-kappa-B, AP-1, AP-2, c-EBP, ATF/CREB, or the calcium-activated factor NF-AT. The protein is Protein X of Chimpanzee hepatitis B virus (isolate United Kingdom/LSH/1988) (HBVcpz).